The primary structure comprises 618 residues: Dihydroxy-acid dehydratase (618 aa).

A Mg(2+)-binding site is contributed by Asp81. Cys122 serves as a coordination point for [2Fe-2S] cluster. Residues Asp123 and Lys124 each coordinate Mg(2+). Lys124 is modified (N6-carboxylysine). [2Fe-2S] cluster is bound at residue Cys195. Glu491 contributes to the Mg(2+) binding site. Catalysis depends on Ser517, which acts as the Proton acceptor.

Belongs to the IlvD/Edd family. As to quaternary structure, homodimer. The cofactor is [2Fe-2S] cluster. Mg(2+) serves as cofactor.

It carries out the reaction (2R)-2,3-dihydroxy-3-methylbutanoate = 3-methyl-2-oxobutanoate + H2O. The catalysed reaction is (2R,3R)-2,3-dihydroxy-3-methylpentanoate = (S)-3-methyl-2-oxopentanoate + H2O. It participates in amino-acid biosynthesis; L-isoleucine biosynthesis; L-isoleucine from 2-oxobutanoate: step 3/4. Its pathway is amino-acid biosynthesis; L-valine biosynthesis; L-valine from pyruvate: step 3/4. Functionally, functions in the biosynthesis of branched-chain amino acids. Catalyzes the dehydration of (2R,3R)-2,3-dihydroxy-3-methylpentanoate (2,3-dihydroxy-3-methylvalerate) into 2-oxo-3-methylpentanoate (2-oxo-3-methylvalerate) and of (2R)-2,3-dihydroxy-3-methylbutanoate (2,3-dihydroxyisovalerate) into 2-oxo-3-methylbutanoate (2-oxoisovalerate), the penultimate precursor to L-isoleucine and L-valine, respectively. The protein is Dihydroxy-acid dehydratase of Dechloromonas aromatica (strain RCB).